Here is a 358-residue protein sequence, read N- to C-terminus: E3 ubiquitin-protein ligase RNF146 (358 aa).

An RING-type zinc finger spans residues 36-74 (CAICLQTCVHPVSLPCKHVFCYLCVKGASWLGKRCALCR). Glycyl lysine isopeptide (Lys-Gly) (interchain with G-Cter in ubiquitin) cross-links involve residues lysine 84 and lysine 94. In terms of domain architecture, WWE spans 91 to 167 (EELKAASRGN…EHGRRRKIKR (77 aa)). Residues tyrosine 107, arginine 110, and tryptophan 114 each contribute to the a glycoprotein site. Residue lysine 130 forms a Glycyl lysine isopeptide (Lys-Gly) (interchain with G-Cter in ubiquitin) linkage. Positions 144, 153, 163, and 175 each coordinate a glycoprotein. A Glycyl lysine isopeptide (Lys-Gly) (interchain with G-Cter in ubiquitin) cross-link involves residue lysine 175. Residues 253 to 358 (GDNTAERSHR…PDGQCTVTEV (106 aa)) form a disordered region. Positions 283–297 (SIEETESDASSDSED) are enriched in acidic residues. A phosphoserine mark is found at serine 289 and serine 293. Residues 305–322 (HSLTQQRLLVSNANQTVP) show a composition bias toward polar residues.

As to quaternary structure, can form homooligomers. Interacts with PARsylated AXIN1, AXIN2, BLZF1, CASC3, H1-2, IPO7, LIG3, NCL, PARP1, XRCC1, XRCC5 and XRCC6. Interacts with DDB1, DHX15, IQGAP1, LRPPRC, PARP2, PRKDC, RUVBL2, TNKS1 and TNKS2. Binding often leads to interactor ubiquitination, in the presence of the appropriate E1 and E2 enzymes, and proteasomal degradation. Ubiquitinated; autoubiquitinated. Autoubiquitination is enhanced upon poly(ADP-ribose)-binding.

The protein localises to the cytoplasm. Its subcellular location is the cytosol. It localises to the nucleus. The enzyme catalyses S-ubiquitinyl-[E2 ubiquitin-conjugating enzyme]-L-cysteine + [acceptor protein]-L-lysine = [E2 ubiquitin-conjugating enzyme]-L-cysteine + N(6)-ubiquitinyl-[acceptor protein]-L-lysine.. It participates in protein modification; protein ubiquitination. Its function is as follows. E3 ubiquitin-protein ligase that specifically binds poly-ADP-ribosylated (PARsylated) proteins and mediates their ubiquitination and subsequent degradation. May regulate many important biological processes, such as cell survival and DNA damage response. Acts as an activator of the Wnt signaling pathway by mediating the ubiquitination of PARsylated AXIN1 and AXIN2, 2 key components of the beta-catenin destruction complex. Acts in cooperation with tankyrase proteins (TNKS and TNKS2), which mediate PARsylation of target proteins AXIN1, AXIN2, BLZF1, CASC3, TNKS and TNKS2. Recognizes and binds tankyrase-dependent PARsylated proteins via its WWE domain and mediates their ubiquitination, leading to their degradation. Different ubiquitin linkage types have been observed: TNKS2 undergoes ubiquitination at 'Lys-48' and 'Lys-63', while AXIN1 is only ubiquitinated at 'Lys-48'. May regulate TNKS and TNKS2 subcellular location, preventing aggregation at a centrosomal location. Neuroprotective protein. Protects the brain against N-methyl-D-aspartate (NMDA) receptor-mediated glutamate excitotoxicity and ischemia, by interfering with PAR-induced cell death, called parthanatos. Prevents nuclear translocation of AIFM1 in a PAR-binding dependent manner. Does not affect PARP1 activation. Protects against cell death induced by DNA damaging agents, such as N-methyl-N-nitro-N-nitrosoguanidine (MNNG) and rescues cells from G1 arrest. Promotes cell survival after gamma-irradiation. Facilitates DNA repair. This Pongo abelii (Sumatran orangutan) protein is E3 ubiquitin-protein ligase RNF146 (RNF146).